The chain runs to 62 residues: Photosystem II reaction center protein Z (62 aa).

2 helical membrane passes run 8–28 and 41–61; these read ALIGLVLLSFVLVVGVPVAYA and WVGSAVWIALVFLVGLLNFFV.

It belongs to the PsbZ family. PSII is composed of 1 copy each of membrane proteins PsbA, PsbB, PsbC, PsbD, PsbE, PsbF, PsbH, PsbI, PsbJ, PsbK, PsbL, PsbM, PsbT, PsbX, PsbY, PsbZ, Psb30/Ycf12, peripheral proteins PsbO, CyanoQ (PsbQ), PsbU, PsbV and a large number of cofactors. It forms dimeric complexes.

The protein resides in the cellular thylakoid membrane. Its function is as follows. May control the interaction of photosystem II (PSII) cores with the light-harvesting antenna, regulates electron flow through the 2 photosystem reaction centers. PSII is a light-driven water plastoquinone oxidoreductase, using light energy to abstract electrons from H(2)O, generating a proton gradient subsequently used for ATP formation. This Nostoc punctiforme (strain ATCC 29133 / PCC 73102) protein is Photosystem II reaction center protein Z.